A 538-amino-acid polypeptide reads, in one-letter code: Cytochrome P450 52A4 (538 aa).

Residues 27–46 (WYILIPTILLTLNFLSILHT) traverse the membrane as a helical segment. Cysteine 485 contacts heme.

This sequence belongs to the cytochrome P450 family. The cofactor is heme.

It is found in the membrane. Functionally, together with an NADPH cytochrome P450 the enzyme system catalyzes the terminal hydroxylation as the first step in the assimilation of alkanes and fatty acids. This is Cytochrome P450 52A4 (CYP52A4) from Candida maltosa (Yeast).